We begin with the raw amino-acid sequence, 385 residues long: Tryptophan--tRNA ligase (385 aa).

Residues 89–98 (PSSKTMHIGH) carry the 'HIGH' region motif. The short motif at 268 to 272 (KMSAS) is the 'KMSKS' region element.

Belongs to the class-I aminoacyl-tRNA synthetase family. Homodimer.

It catalyses the reaction tRNA(Trp) + L-tryptophan + ATP = L-tryptophyl-tRNA(Trp) + AMP + diphosphate + H(+). This is Tryptophan--tRNA ligase from Encephalitozoon cuniculi (strain GB-M1) (Microsporidian parasite).